Consider the following 95-residue polypeptide: Aspartyl/glutamyl-tRNA(Asn/Gln) amidotransferase subunit C (95 aa).

This sequence belongs to the GatC family. In terms of assembly, heterotrimer of A, B and C subunits.

The enzyme catalyses L-glutamyl-tRNA(Gln) + L-glutamine + ATP + H2O = L-glutaminyl-tRNA(Gln) + L-glutamate + ADP + phosphate + H(+). It catalyses the reaction L-aspartyl-tRNA(Asn) + L-glutamine + ATP + H2O = L-asparaginyl-tRNA(Asn) + L-glutamate + ADP + phosphate + 2 H(+). In terms of biological role, allows the formation of correctly charged Asn-tRNA(Asn) or Gln-tRNA(Gln) through the transamidation of misacylated Asp-tRNA(Asn) or Glu-tRNA(Gln) in organisms which lack either or both of asparaginyl-tRNA or glutaminyl-tRNA synthetases. The reaction takes place in the presence of glutamine and ATP through an activated phospho-Asp-tRNA(Asn) or phospho-Glu-tRNA(Gln). This Maricaulis maris (strain MCS10) (Caulobacter maris) protein is Aspartyl/glutamyl-tRNA(Asn/Gln) amidotransferase subunit C.